A 756-amino-acid chain; its full sequence is 5-methyltetrahydropteroyltriglutamate--homocysteine methyltransferase (756 aa).

5-methyltetrahydropteroyltri-L-glutamate contacts are provided by residues 16 to 19 and Lys112; that span reads RELK. L-homocysteine-binding positions include 432–434 and Glu485; that span reads IGS. Residues 432 to 434 and Glu485 contribute to the L-methionine site; that span reads IGS. 5-methyltetrahydropteroyltri-L-glutamate contacts are provided by residues 516–517 and Trp562; that span reads RC. Asp600 contacts L-homocysteine. Asp600 lines the L-methionine pocket. Glu606 lines the 5-methyltetrahydropteroyltri-L-glutamate pocket. Residues His642, Cys644, and Glu666 each coordinate Zn(2+). His695 functions as the Proton donor in the catalytic mechanism. Residue Cys727 participates in Zn(2+) binding.

This sequence belongs to the vitamin-B12 independent methionine synthase family. Zn(2+) is required as a cofactor.

The enzyme catalyses 5-methyltetrahydropteroyltri-L-glutamate + L-homocysteine = tetrahydropteroyltri-L-glutamate + L-methionine. The protein operates within amino-acid biosynthesis; L-methionine biosynthesis via de novo pathway; L-methionine from L-homocysteine (MetE route): step 1/1. In terms of biological role, catalyzes the transfer of a methyl group from 5-methyltetrahydrofolate to homocysteine resulting in methionine formation. This Haemophilus influenzae (strain PittGG) protein is 5-methyltetrahydropteroyltriglutamate--homocysteine methyltransferase.